Consider the following 132-residue polypeptide: uncharacterized protein (132 aa).

Residue lysine 59 forms a Glycyl lysine isopeptide (Lys-Gly) (interchain with G-Cter in SAMP2) linkage.

The protein belongs to the OsmC/Ohr family.

This is an uncharacterized protein from Haloferax volcanii (strain ATCC 29605 / DSM 3757 / JCM 8879 / NBRC 14742 / NCIMB 2012 / VKM B-1768 / DS2) (Halobacterium volcanii).